Reading from the N-terminus, the 492-residue chain is MEPTSKKLTGRLMLAVGGAVLGSLQFGYNTGVINAPQKVIEEFYNQTWVQRYGEPIPPATLTTLWSLSVAIFSVGGMIGSFSVGLFVNRFGRRNSMLMMNLLAFVSAVLMGFSKLGKSFEMLILGRFIIGVYCGLTTGFVPMYVGEVSPTELRGALGTLHQLGIVVGILIAQVFGLDSIMGNQELWPLLLSVIFIPALLQCILLPFCPESPRFLLINRNEENRAKSVLKKLRGTADVTRDLQEMKEESRQMMREKKVTILELFRSAAYRQPILIAVVLQLSQQLSGINAVFYYSTSIFEKAGVQQPVYATIGSGIVNTAFTVVSLFVVERAGRRTLHLIGLAGMAGCAVLMTIALALLERLPWMSYLSIVAIFGFVAFFEVGPGPIPWFIVAELFSQGPRPAAIAVAGFSNWTSNFIVGMCFQYVEQLCGPYVFIIFTVLLVLFFIFTYFKVPETKGRTFDEIASGFRQGGASQSDKTPEELFHPLGADSQV.

Position 1 is an N-acetylmethionine (methionine 1). At 1-11 the chain is on the cytoplasmic side; that stretch reads MEPTSKKLTGR. The chain crosses the membrane as a helical span at residues 12 to 33; that stretch reads LMLAVGGAVLGSLQFGYNTGVI. The Extracellular portion of the chain corresponds to 34–66; sequence NAPQKVIEEFYNQTWVQRYGEPIPPATLTTLWS. Asparagine 45 carries an N-linked (GlcNAc...) asparagine glycan. The chain crosses the membrane as a helical span at residues 67–87; it reads LSVAIFSVGGMIGSFSVGLFV. Over 88–90 the chain is Cytoplasmic; sequence NRF. Residues 91–112 traverse the membrane as a helical segment; it reads GRRNSMLMMNLLAFVSAVLMGF. Topologically, residues 113–120 are extracellular; it reads SKLGKSFE. A helical membrane pass occupies residues 121 to 144; the sequence is MLILGRFIIGVYCGLTTGFVPMYV. Residues 145-155 are Cytoplasmic-facing; that stretch reads GEVSPTELRGA. A helical transmembrane segment spans residues 156 to 176; the sequence is LGTLHQLGIVVGILIAQVFGL. Glutamine 161 lines the D-glucose pocket. At 177–185 the chain is on the extracellular side; sequence DSIMGNQEL. A helical transmembrane segment spans residues 186–206; it reads WPLLLSVIFIPALLQCILLPF. At 207–271 the chain is on the cytoplasmic side; that stretch reads CPESPRFLLI…LFRSAAYRQP (65 aa). At serine 226 the chain carries Phosphoserine. A helical transmembrane segment spans residues 272–293; the sequence is ILIAVVLQLSQQLSGINAVFYY. D-glucose contacts are provided by residues 282-283 and asparagine 288; that span reads QQ. Residues 294 to 306 are Extracellular-facing; that stretch reads STSIFEKAGVQQP. Residues 307 to 328 traverse the membrane as a helical segment; that stretch reads VYATIGSGIVNTAFTVVSLFVV. D-glucose is bound at residue asparagine 317. The Cytoplasmic segment spans residues 329–334; that stretch reads ERAGRR. A helical transmembrane segment spans residues 335–355; sequence TLHLIGLAGMAGCAVLMTIAL. Residues 356 to 365 are Extracellular-facing; that stretch reads ALLERLPWMS. The helical transmembrane segment at 366 to 388 threads the bilayer; the sequence is YLSIVAIFGFVAFFEVGPGPIPW. D-glucose-binding residues include glutamate 380 and tryptophan 388. Residues 389–401 are Cytoplasmic-facing; the sequence is FIVAELFSQGPRP. The helical transmembrane segment at 402 to 422 threads the bilayer; it reads AAIAVAGFSNWTSNFIVGMCF. Residues 423 to 429 are Extracellular-facing; it reads QYVEQLC. Residues 430–450 form a helical membrane-spanning segment; the sequence is GPYVFIIFTVLLVLFFIFTYF. At 451–492 the chain is on the cytoplasmic side; that stretch reads KVPETKGRTFDEIASGFRQGGASQSDKTPEELFHPLGADSQV. A Phosphoserine modification is found at serine 465. Residues 468–492 are disordered; that stretch reads RQGGASQSDKTPEELFHPLGADSQV. At threonine 478 the chain carries Phosphothreonine. Phosphoserine is present on serine 490.

This sequence belongs to the major facilitator superfamily. Sugar transporter (TC 2.A.1.1) family. Glucose transporter subfamily. In terms of assembly, found in a complex with ADD2, DMTN and SLC2A1. Interacts (via C-terminus cytoplasmic region) with DMTN. Interacts with SNX27; the interaction is required when endocytosed to prevent degradation in lysosomes and promote recycling to the plasma membrane. Interacts with GIPC (via PDZ domain). Interacts with STOM. Interacts with SGTA (via Gln-rich region). Interacts with BSG. Interacts with SMIM43; the interaction may promote SLC2A1-mediated glucose transport to meet the energy needs of mesendoderm differentiation. Phosphorylation at Ser-226 by PKC promotes glucose uptake by increasing cell membrane localization. As to expression, detected in brain capillary (at protein level). Detected in brain capillary.

The protein resides in the cell membrane. It is found in the photoreceptor inner segment. The catalysed reaction is D-glucose(out) = D-glucose(in). Its activity is regulated as follows. The uptake of glucose is inhibited by cytochalasin B. Glucose uptake is increased in response to phorbol ester 12-O-tetradecanoylphorbol-13-acetate (TPA) treatment: TPA-induced glucose uptake requires phosphorylation at Ser-226. In terms of biological role, facilitative glucose transporter, which is responsible for constitutive or basal glucose uptake. Has a very broad substrate specificity; can transport a wide range of aldoses including both pentoses and hexoses. Most important energy carrier of the brain: present at the blood-brain barrier and assures the energy-independent, facilitative transport of glucose into the brain. In association with BSG and NXNL1, promotes retinal cone survival by increasing glucose uptake into photoreceptors. Required for mesendoderm differentiation. This chain is Solute carrier family 2, facilitated glucose transporter member 1, found in Bos taurus (Bovine).